Consider the following 148-residue polypeptide: RxLR effector protein SFI7 (148 aa).

Residues 1-22 (MRAYFVLLVAATAILTYGGATA) form the signal peptide. Asn32 carries an N-linked (GlcNAc...) asparagine glycan. The short motif at 44-58 (RSLRVAPSGGNGEER) is the RxLR-dEER element.

It belongs to the RxLR effector family.

It is found in the secreted. The protein localises to the host cytoplasm. The protein resides in the host cell membrane. In terms of biological role, effector that suppresses flg22-induced post-translational MAP kinase activation in tomato but not in Arabidopsis. The perception of highly conserved pathogen- or microbe-associated molecular patterns (PAMPs/MAMPs), such as flg22, triggers converging signaling pathways recruiting MAP kinase cascades and inducing transcriptional re-programming, yielding a generic antimicrobial response. Also partially attenuates INF1-triggered cell death. The protein is RxLR effector protein SFI7 of Phytophthora infestans (strain T30-4) (Potato late blight agent).